Reading from the N-terminus, the 345-residue chain is Phenylalanine--tRNA ligase alpha subunit (345 aa).

Glutamate 266 is a Mg(2+) binding site.

This sequence belongs to the class-II aminoacyl-tRNA synthetase family. Phe-tRNA synthetase alpha subunit type 1 subfamily. In terms of assembly, tetramer of two alpha and two beta subunits. Mg(2+) is required as a cofactor.

Its subcellular location is the cytoplasm. The enzyme catalyses tRNA(Phe) + L-phenylalanine + ATP = L-phenylalanyl-tRNA(Phe) + AMP + diphosphate + H(+). The sequence is that of Phenylalanine--tRNA ligase alpha subunit from Methylibium petroleiphilum (strain ATCC BAA-1232 / LMG 22953 / PM1).